We begin with the raw amino-acid sequence, 379 residues long: Cysteine-rich receptor-like protein kinase 44 (379 aa).

Residues 56–336 (FSPYNHLGEG…VRMLNANSFT (281 aa)) enclose the Protein kinase domain. ATP is bound by residues 62–70 (LGEGGFGAV) and Lys84. Position 129 is a phosphotyrosine (Tyr129). Asp181 serves as the catalytic Proton acceptor. Residue Ser185 is modified to Phosphoserine. Phosphothreonine is present on Thr223. Tyr231 carries the phosphotyrosine modification.

This sequence belongs to the protein kinase superfamily. Ser/Thr protein kinase family. CRK subfamily.

The enzyme catalyses L-seryl-[protein] + ATP = O-phospho-L-seryl-[protein] + ADP + H(+). It carries out the reaction L-threonyl-[protein] + ATP = O-phospho-L-threonyl-[protein] + ADP + H(+). The sequence is that of Cysteine-rich receptor-like protein kinase 44 from Arabidopsis thaliana (Mouse-ear cress).